Consider the following 297-residue polypeptide: Transmembrane protein 178A (297 aa).

The signal sequence occupies residues 1 to 25 (MEPRALVTALSLGLSLCSLGLLVTA). Topologically, residues 26–179 (IFTDHWYETD…LLHLRRITAG (154 aa)) are extracellular. Over residues 41 to 57 (ESCERSRAGADPPDQKN) the composition is skewed to basic and acidic residues. Positions 41-84 (ESCERSRAGADPPDQKNRLMPLSHLPLRDSPPLGRRLLPGGPGR) are disordered. Residues 68–79 (RDSPPLGRRLLP) are compositionally biased toward low complexity. The N-linked (GlcNAc...) asparagine glycan is linked to Asn-158. A helical transmembrane segment spans residues 180–200 (FLGMAVAVLLCGCIVATVSFF). Residues 201 to 208 (WEESLTQH) lie on the Cytoplasmic side of the membrane. The chain crosses the membrane as a helical span at residues 209–229 (VAGLLFLMTGIFCTISLCTYA). At 230–257 (ASISYDLNRLPKLIYSLPADVEHGYSWS) the chain is on the extracellular side. Residues 258 to 278 (IFCAWCSLGFIVAAGGLCIAY) traverse the membrane as a helical segment. Over 279–297 (PFISRTKIAQLKSGRDSTV) the chain is Cytoplasmic.

This sequence belongs to the TMEM178 family. As to quaternary structure, interacts with STIM1.

The protein localises to the endoplasmic reticulum membrane. In terms of biological role, acts as a negative regulator of osteoclast differentiation in basal and inflammatory conditions by regulating TNFSF11-induced Ca (2+) fluxes, thereby controlling the induction of NFATC1. The protein is Transmembrane protein 178A (TMEM178A) of Homo sapiens (Human).